Reading from the N-terminus, the 802-residue chain is MLVSYKWLKELVDVDVTTAELAEKMSTTGIEVEGVKTPAEGLSKLVVGHVLSCEDVPETHLHLCQVDTGDAEGPRQIVCGAPNITAGIKVIVAIPGARIADNYKIKKGKIRGMESLGMICSLAELGLPDSIIPKEFADGIQILPEDAVPGDSIFPYLDLDDEIIELSITPNRADALSMRGVAHEVAAIYGKSVHFPEKTVTEDSKPASDKISVAIESDKVTTYASRVVENVTVQPSPQWLQNLLMNAGIRPINNVVDVTNYVLLYFGQPMHAFDLDKLEESHIVARDAREGEKLVTLDGEERELTAEDIVITVADKPVSLGGIMGGASTEIDNNSKNVVLEAAVFDGKSVRKTSSRLNLRSESSSRFEKGVNNDTVLEALDFAAAMLQELANGSVLAGRVQAGSVDTEPVQVSTSLDYVNVRLGTELTFADIEDVFAKLGFGLTGDADRFTVSVPRRRWDISIQADLVEEIARIYGYEKLPTTLPEAAGTSGELTKTQTLRRKVRTIAEGAGLTEIISYTLTTPEKAVEFAATPSNLTELMWPMTVDRSALRQNLVSGMLDTVAYNVNRKNSNVAIYEIGKVFEQNGNPKEELPNEINTFAFAISGLVAEKDFQTKATPVDFFYAKGIIEALFNKLEVSVDYVATKDLASMHPGRTAAIVLDGQTIGFLGQVHPQTAKNYGIPETYVAEINLSAVEDALKPAQPFVEITKFPAVSRDIALLLKADITHQEVLDAIYSAGVKRLIAVKLFDVYTGEKLGAGMKSMAYSLTFQNPNDNLTDEEVAKYMEKITKALTEKVEAEVR.

The 116-residue stretch at 39–154 (AEGLSKLVVG…EDAVPGDSIF (116 aa)) folds into the tRNA-binding domain. One can recognise a B5 domain in the interval 407 to 482 (TEPVQVSTSL…RIYGYEKLPT (76 aa)). Positions 460, 466, 469, and 470 each coordinate Mg(2+). Residues 709–802 (TKFPAVSRDI…LTEKVEAEVR (94 aa)) enclose the FDX-ACB domain.

The protein belongs to the phenylalanyl-tRNA synthetase beta subunit family. Type 1 subfamily. Tetramer of two alpha and two beta subunits. Requires Mg(2+) as cofactor.

It localises to the cytoplasm. It carries out the reaction tRNA(Phe) + L-phenylalanine + ATP = L-phenylalanyl-tRNA(Phe) + AMP + diphosphate + H(+). The chain is Phenylalanine--tRNA ligase beta subunit from Streptococcus thermophilus (strain CNRZ 1066).